The following is a 370-amino-acid chain: tRNA pseudouridine synthase D (370 aa).

The active-site Nucleophile is aspartate 77. The region spanning 152 to 297 is the TRUD domain; that stretch reads GVPNYFGEQR…LEQERRPLLL (146 aa).

It belongs to the pseudouridine synthase TruD family.

The enzyme catalyses uridine(13) in tRNA = pseudouridine(13) in tRNA. Responsible for synthesis of pseudouridine from uracil-13 in transfer RNAs. The chain is tRNA pseudouridine synthase D from Shewanella oneidensis (strain ATCC 700550 / JCM 31522 / CIP 106686 / LMG 19005 / NCIMB 14063 / MR-1).